We begin with the raw amino-acid sequence, 320 residues long: ATP-dependent 6-phosphofructokinase (320 aa).

ATP is bound by residues glycine 11, 72-73, and 102-105; these read RY and GDGS. Residue aspartate 103 coordinates Mg(2+). Residues 125-127, arginine 162, 169-171, glutamate 222, arginine 243, and 249-252 each bind substrate; these read TID, MGR, and HMQR. Aspartate 127 acts as the Proton acceptor in catalysis.

It belongs to the phosphofructokinase type A (PFKA) family. ATP-dependent PFK group I subfamily. Prokaryotic clade 'B1' sub-subfamily. In terms of assembly, homotetramer. Mg(2+) serves as cofactor.

It localises to the cytoplasm. The catalysed reaction is beta-D-fructose 6-phosphate + ATP = beta-D-fructose 1,6-bisphosphate + ADP + H(+). The protein operates within carbohydrate degradation; glycolysis; D-glyceraldehyde 3-phosphate and glycerone phosphate from D-glucose: step 3/4. With respect to regulation, allosterically activated by ADP and other diphosphonucleosides, and allosterically inhibited by phosphoenolpyruvate. Its function is as follows. Catalyzes the phosphorylation of D-fructose 6-phosphate to fructose 1,6-bisphosphate by ATP, the first committing step of glycolysis. This is ATP-dependent 6-phosphofructokinase from Lactiplantibacillus plantarum (strain ATCC BAA-793 / NCIMB 8826 / WCFS1) (Lactobacillus plantarum).